Reading from the N-terminus, the 253-residue chain is Trans-aconitate 2-methyltransferase (253 aa).

Belongs to the methyltransferase superfamily. Tam family.

The protein localises to the cytoplasm. It catalyses the reaction trans-aconitate + S-adenosyl-L-methionine = (E)-3-(methoxycarbonyl)pent-2-enedioate + S-adenosyl-L-homocysteine. Catalyzes the S-adenosylmethionine monomethyl esterification of trans-aconitate. The sequence is that of Trans-aconitate 2-methyltransferase from Klebsiella pneumoniae (strain 342).